The sequence spans 60 residues: Large ribosomal subunit protein bL33 (60 aa).

Belongs to the bacterial ribosomal protein bL33 family.

The polypeptide is Large ribosomal subunit protein bL33 (Christiangramia forsetii (strain DSM 17595 / CGMCC 1.15422 / KT0803) (Gramella forsetii)).